We begin with the raw amino-acid sequence, 693 residues long: Polyribonucleotide nucleotidyltransferase (693 aa).

Mg(2+) contacts are provided by Asp489 and Asp495. Positions 556 to 615 (PQIHIMNVNPAKIKDVVGRGGSVVKGIVEKTGAQIDTSDSGEVKIFAKDKRSLDLAKSMV) constitute a KH domain. One can recognise an S1 motif domain in the interval 625 to 693 (GQIYKGKIVK…GRVKLSLVAR (69 aa)).

This sequence belongs to the polyribonucleotide nucleotidyltransferase family. As to quaternary structure, component of the RNA degradosome, which is a multiprotein complex involved in RNA processing and mRNA degradation. Mg(2+) serves as cofactor.

The protein localises to the cytoplasm. The catalysed reaction is RNA(n+1) + phosphate = RNA(n) + a ribonucleoside 5'-diphosphate. Functionally, involved in mRNA degradation. Catalyzes the phosphorolysis of single-stranded polyribonucleotides processively in the 3'- to 5'-direction. The protein is Polyribonucleotide nucleotidyltransferase of Francisella philomiragia subsp. philomiragia (strain ATCC 25017 / CCUG 19701 / FSC 153 / O#319-036).